The primary structure comprises 465 residues: ATP synthase subunit beta (465 aa).

Residue 153–160 coordinates ATP; it reads GGAGVGKT.

This sequence belongs to the ATPase alpha/beta chains family. In terms of assembly, F-type ATPases have 2 components, CF(1) - the catalytic core - and CF(0) - the membrane proton channel. CF(1) has five subunits: alpha(3), beta(3), gamma(1), delta(1), epsilon(1). CF(0) has three main subunits: a(1), b(2) and c(9-12). The alpha and beta chains form an alternating ring which encloses part of the gamma chain. CF(1) is attached to CF(0) by a central stalk formed by the gamma and epsilon chains, while a peripheral stalk is formed by the delta and b chains.

It localises to the cell membrane. It carries out the reaction ATP + H2O + 4 H(+)(in) = ADP + phosphate + 5 H(+)(out). Functionally, produces ATP from ADP in the presence of a proton gradient across the membrane. The catalytic sites are hosted primarily by the beta subunits. The chain is ATP synthase subunit beta from Clostridium perfringens (strain SM101 / Type A).